The following is a 971-amino-acid chain: Translation initiation factor IF-2 (971 aa).

Residues 49–63 are compositionally biased toward basic and acidic residues; it reads HLRKSHGATDGDKRK. Disordered stretches follow at residues 49–86 and 101–385; these read HLRK…ARTI and DVAE…APTE. The segment covering 105–114 has biased composition (low complexity); that stretch reads GAEQGQAQVA. The span at 121-177 shows a compositional bias: basic and acidic residues; the sequence is ELKRREEEARREAELLEKQAQELRERQERLEREEAERRAREEAAEAQRRRAEEEAAA. A compositionally biased stretch (low complexity) spans 178 to 209; sequence KRAAAAAVEAQQVAAQQAAEAQQETAGAQSAQ. The span at 210 to 261 shows a compositional bias: basic and acidic residues; sequence DEARAAAERAAQREAAKKAEDAAREAADKTRAEQEEIRKRREAAEAEARAIR. Residues 277 to 286 are compositionally biased toward pro residues; the sequence is PPKPVEPPKP. Residues 298–325 are compositionally biased toward low complexity; the sequence is KPAGASAARPAVKKPAGAAPATTAPAGA. A compositionally biased stretch (gly residues) spans 355–368; it reads SSGGVDRGWRGGPK. Positions 471 to 640 constitute a tr-type G domain; that stretch reads PRPPVVTVMG…LLQAEVLELK (170 aa). The tract at residues 480-487 is G1; the sequence is GHVDHGKT. A GTP-binding site is contributed by 480 to 487; sequence GHVDHGKT. The G2 stretch occupies residues 505–509; that stretch reads GITQH. A G3 region spans residues 526–529; it reads DTPG. Residues 526 to 530 and 580 to 583 contribute to the GTP site; these read DTPGH and NKID. Residues 580 to 583 form a G4 region; that stretch reads NKID. The tract at residues 616–618 is G5; it reads SAK.

Belongs to the TRAFAC class translation factor GTPase superfamily. Classic translation factor GTPase family. IF-2 subfamily.

The protein resides in the cytoplasm. In terms of biological role, one of the essential components for the initiation of protein synthesis. Protects formylmethionyl-tRNA from spontaneous hydrolysis and promotes its binding to the 30S ribosomal subunits. Also involved in the hydrolysis of GTP during the formation of the 70S ribosomal complex. The chain is Translation initiation factor IF-2 from Burkholderia ambifaria (strain ATCC BAA-244 / DSM 16087 / CCUG 44356 / LMG 19182 / AMMD) (Burkholderia cepacia (strain AMMD)).